The primary structure comprises 1233 residues: Mitogen-activated protein kinase kinase kinase kinase 4 (1233 aa).

A2 is modified (N-acetylalanine). S5 carries the phosphoserine modification. Residues 25-289 (FELVEVVGNG…EQLLKHPFIR (265 aa)) form the Protein kinase domain. Residues 31-39 (VGNGTYGQV) and K53 contribute to the ATP site. The Proton acceptor role is filled by D152. Disordered stretches follow at residues 305 to 348 (IDRT…VPGE), 401 to 463 (QKEQ…VERE), and 489 to 805 (QAML…ETES). The span at 316–337 (DETEYEYSGSEEEEEEVPEQEG) shows a compositional bias: acidic residues. 2 positions are modified to phosphoserine: S323 and S325. Residues 521–537 (PEPKPHYDPADRAREVQ) show a composition bias toward basic and acidic residues. Position 543 is a phosphoserine (S543). Positions 544–559 (LKNNVSPVSRSHSFSD) are enriched in polar residues. S619, S621, S629, and S646 each carry phosphoserine. The span at 654 to 663 (LLWERVEKLV) shows a compositional bias: basic and acidic residues. The segment covering 666–692 (PGSGSSSGSSNSGSQPGSHPGSQSGSG) has biased composition (low complexity). A phosphoserine mark is found at S691, S703, and S706. 2 stretches are compositionally biased toward basic and acidic residues: residues 713-726 (SAAK…EVFR) and 741-756 (KELR…HKVT). Over residues 766–781 (GTTDEEEEDVEQEGAD) the composition is skewed to acidic residues. Over residues 783 to 803 (STSGPEDTRAASSPNLSNGET) the composition is skewed to polar residues. Residues S785, S794, S795, S799, and S817 each carry the phosphoserine modification. T822 carries the post-translational modification Phosphothreonine. S846, S849, S894, and S907 each carry phosphoserine. Residues 852 to 1206 (PFIDPRLLQI…LKFLCGRNDK (355 aa)) form a mediates interaction with RAP2A region. In terms of domain architecture, CNH spans 920-1207 (NSEILCAALW…KFLCGRNDKV (288 aa)).

The protein belongs to the protein kinase superfamily. STE Ser/Thr protein kinase family. STE20 subfamily. In terms of assembly, interacts with the SH3 domain of the adapter proteins Nck. Interacts (via its CNH regulatory domain) with ATL1 (via the N-terminal region). Interacts with RAP2A (GTP-bound form preferentially). Mg(2+) serves as cofactor. In terms of tissue distribution, appears to be ubiquitous, expressed in all tissue types examined. Highest levels observed in heart and brain.

Its subcellular location is the cytoplasm. The enzyme catalyses L-seryl-[protein] + ATP = O-phospho-L-seryl-[protein] + ADP + H(+). The catalysed reaction is L-threonyl-[protein] + ATP = O-phospho-L-threonyl-[protein] + ADP + H(+). Its function is as follows. Serine/threonine kinase that plays a role in the response to environmental stress and cytokines such as TNF-alpha. Appears to act upstream of the JUN N-terminal pathway. Activator of the Hippo signaling pathway which plays a pivotal role in organ size control and tumor suppression by restricting proliferation and promoting apoptosis. MAP4Ks act in parallel to and are partially redundant with STK3/MST2 and STK4/MST2 in the phosphorylation and activation of LATS1/2, and establish MAP4Ks as components of the expanded Hippo pathway. Phosphorylates SMAD1 on Thr-322. In Mus musculus (Mouse), this protein is Mitogen-activated protein kinase kinase kinase kinase 4 (Map4k4).